Here is a 294-residue protein sequence, read N- to C-terminus: Glyceraldehyde-3-phosphate dehydrogenase (294 aa).

D19, K63, and T105 together coordinate NAD(+). D-glyceraldehyde 3-phosphate is bound by residues 134–136, T165, 194–195, and R217; these read SCT and TG. The Nucleophile role is filled by C135.

Belongs to the glyceraldehyde-3-phosphate dehydrogenase family. Homotetramer.

Its subcellular location is the cytoplasm. The catalysed reaction is D-glyceraldehyde 3-phosphate + phosphate + NAD(+) = (2R)-3-phospho-glyceroyl phosphate + NADH + H(+). It functions in the pathway carbohydrate degradation; glycolysis; pyruvate from D-glyceraldehyde 3-phosphate: step 1/5. In terms of biological role, catalyzes the oxidative phosphorylation of glyceraldehyde 3-phosphate (G3P) to 1,3-bisphosphoglycerate (BPG) using the cofactor NAD. The first reaction step involves the formation of a hemiacetal intermediate between G3P and a cysteine residue, and this hemiacetal intermediate is then oxidized to a thioester, with concomitant reduction of NAD to NADH. The reduced NADH is then exchanged with the second NAD, and the thioester is attacked by a nucleophilic inorganic phosphate to produce BPG. The sequence is that of Glyceraldehyde-3-phosphate dehydrogenase (gap) from Atlantibacter hermannii (Escherichia hermannii).